Here is a 24-residue protein sequence, read N- to C-terminus: Sperm protamine P3 (24 aa).

Residues 1-24 (RRRRRRRRHRRRRGRRGRRSRGRR) form a disordered region.

In terms of tissue distribution, testis.

It localises to the nucleus. The protein localises to the chromosome. Protamines substitute for histones in the chromatin of sperm during the haploid phase of spermatogenesis. They compact sperm DNA into a highly condensed, stable and inactive complex. The polypeptide is Sperm protamine P3 (Octopus vulgaris (Common octopus)).